The sequence spans 177 residues: MSSNECFKCGRSGHWARECPTGGGRGRGMRSRGRGGFTSDRGFQFVSSSLPDICYRCGESGHLAKDCDLQEDACYNCGRGGHIAKDCKEPKREREQCCYNCGKPGHLARDCDHADEQKCYSCGEFGHIQKDCTKVKCYRCGETGHVAINCSKTSEVNCYRCGESGHLARECTIEATA.

Residue serine 2 is modified to N-acetylserine. The CCHC-type 1 zinc-finger motif lies at 4–21; sequence NECFKCGRSGHWARECPT. Position 8 is an N6-acetyllysine (lysine 8). 2 positions are modified to omega-N-methylarginine; by PRMT1: arginine 25 and arginine 27. Residues 25-38 are RNA-binding Arg/Gly-rich region (RGG-box); it reads RGRGMRSRGRGGFT. Omega-N-methylarginine is present on residues arginine 32 and arginine 34. Residue serine 49 is modified to Phosphoserine. CCHC-type zinc fingers lie at residues 52–69, 72–89, 96–113, 117–134, 135–152, and 156–173; these read DICY…DCDL, DACY…DCKE, QCCY…DCDH, QKCY…DCTK, VKCY…NCSK, and VNCY…ECTI. An omega-N-methylarginine mark is found at alanine 73, arginine 79, and glycine 80.

In terms of assembly, associates with the 40S ribosomal subunit, the 80S ribosome and with polysomes. Arginine methylation by PRMT1 in the Arg/Gly-rich region impedes RNA binding. As to expression, expressed in the liver, kidney, spleen, testis, lung, muscle and adrenal glands.

The protein localises to the nucleus. It is found in the cytoplasm. It localises to the endoplasmic reticulum. Its function is as follows. Single-stranded DNA-binding protein that preferentially binds to the sterol regulatory element (SRE) sequence 5'-GTGCGGTG-3', and thereby mediates transcriptional repression. Has a role as transactivator of the Myc promoter. Binds single-stranded RNA in a sequence-specific manner. Binds G-rich elements in target mRNA coding sequences. Prevents G-quadruplex structure formation in vitro, suggesting a role in supporting translation by resolving stable structures on mRNAs. Functionally, binds to RNA. The protein is CCHC-type zinc finger nucleic acid binding protein of Homo sapiens (Human).